A 192-amino-acid polypeptide reads, in one-letter code: MTPSATKPLVSEAPKGIIDPSTGRPILSDDPFYKEINAELADKGFLVTTVDDLITWARTGSLMWMTFGLACCAVEMMQVSMPRYDVERFGFAPRASPRQSDVMIVAGTLTNKMAPALRKVYDQMPEPRYVISMGSCANGGGYYHYSYAVVRGCDRVVPVDIYVPGCPPTAEALLYGVLLLQRKIRRTGTIER.

Cys71, Cys72, Cys136, and Cys166 together coordinate [4Fe-4S] cluster.

This sequence belongs to the complex I 20 kDa subunit family. In terms of assembly, NDH-1 is composed of 14 different subunits. Subunits NuoB, C, D, E, F, and G constitute the peripheral sector of the complex. The cofactor is [4Fe-4S] cluster.

It localises to the cell inner membrane. It carries out the reaction a quinone + NADH + 5 H(+)(in) = a quinol + NAD(+) + 4 H(+)(out). Its function is as follows. NDH-1 shuttles electrons from NADH, via FMN and iron-sulfur (Fe-S) centers, to quinones in the respiratory chain. Couples the redox reaction to proton translocation (for every two electrons transferred, four hydrogen ions are translocated across the cytoplasmic membrane), and thus conserves the redox energy in a proton gradient. The polypeptide is NADH-quinone oxidoreductase subunit B (Azorhizobium caulinodans (strain ATCC 43989 / DSM 5975 / JCM 20966 / LMG 6465 / NBRC 14845 / NCIMB 13405 / ORS 571)).